We begin with the raw amino-acid sequence, 567 residues long: DNA ligase B (567 aa).

Lys126 serves as the catalytic N6-AMP-lysine intermediate.

This sequence belongs to the NAD-dependent DNA ligase family. LigB subfamily.

The catalysed reaction is NAD(+) + (deoxyribonucleotide)n-3'-hydroxyl + 5'-phospho-(deoxyribonucleotide)m = (deoxyribonucleotide)n+m + AMP + beta-nicotinamide D-nucleotide.. Functionally, catalyzes the formation of phosphodiester linkages between 5'-phosphoryl and 3'-hydroxyl groups in double-stranded DNA using NAD as a coenzyme and as the energy source for the reaction. The polypeptide is DNA ligase B (Pseudomonas putida (strain W619)).